We begin with the raw amino-acid sequence, 74 residues long: MKQIALFLIKCYKFISQFLPSICRFQPSCSTYAYQAIETYGFFKGSLLTFKRIIRCRPFCAGGFDPVPLPKKKI.

The protein belongs to the UPF0161 family.

It is found in the cell inner membrane. Functionally, could be involved in insertion of integral membrane proteins into the membrane. The polypeptide is Putative membrane protein insertion efficiency factor (Endomicrobium trichonymphae).